The sequence spans 2146 residues: YLP motif-containing protein 1 (2146 aa).

Disordered regions lie at residues 1-381 (MYPN…ARLK) and 562-880 (PPVM…FKMQ). The segment covering 14 to 26 (YPPPPVPPPPPVA) has biased composition (pro residues). Low complexity-rich tracts occupy residues 27 to 48 (LPEA…PSSS) and 58 to 79 (LAQL…LQPH). Pro residues-rich tracts occupy residues 80–92 (HLPP…PPVM), 101–113 (QPPP…PPGP), 147–157 (PESPPVPPGSY), 165–175 (MPPPQPPPSYY), and 183–194 (YLPPAQPSPSQS). Residues 195–237 (PPSQSYLAPTPSYSSSSSSSQSYLSHSQSYLPSSQASPSRPSQ) are compositionally biased toward low complexity. 2 stretches are compositionally biased toward polar residues: residues 256 to 279 (NKTT…QQQA) and 286 to 308 (STMT…LQQR). Residues 309 to 319 (TKVHLPGHKKG) are compositionally biased toward basic residues. Positions 325-334 (DTPEPVKEEV) are enriched in basic and acidic residues. Composition is skewed to pro residues over residues 349 to 368 (EEPP…PPEE), 562 to 579 (PPVM…PGMP), and 586 to 642 (GPPP…PQGI). The segment covering 643–663 (PPQLTAAPVPPASSSQSSQVP) has biased composition (low complexity). Polar residues predominate over residues 692 to 702 (AGPSEQVNSKA). Position 735 is an N6-methyllysine (K735). S756 carries the post-translational modification Phosphoserine. Residues 758–806 (RGPRFDGPRRFEDLGSRCEGPRPKGPRFEGNRPDGPRPRYEGHPAEGTK) are compositionally biased toward basic and acidic residues. R814 is modified (omega-N-methylarginine). 2 stretches are compositionally biased toward polar residues: residues 820–835 (FYIT…QSGP) and 868–880 (DTSS…FKMQ). S829 is modified (phosphoserine). R831 carries the omega-N-methylarginine modification. K891 is covalently cross-linked (Glycyl lysine isopeptide (Lys-Gly) (interchain with G-Cter in SUMO2)). Disordered regions lie at residues 895-1211 (AAQS…GRNA) and 1243-1351 (NRED…DDRW). Composition is skewed to polar residues over residues 896-909 (AQSN…QQEP) and 923-933 (NWDQNVQSMET). K983 is covalently cross-linked (Glycyl lysine isopeptide (Lys-Gly) (interchain with G-Cter in SUMO1); alternate). A Glycyl lysine isopeptide (Lys-Gly) (interchain with G-Cter in SUMO2); alternate cross-link involves residue K983. Composition is skewed to basic and acidic residues over residues 994–1012 (NNQD…RLEG), 1027–1036 (RMEDTRDKGL), and 1053–1093 (KQED…REKV). K1053 is covalently cross-linked (Glycyl lysine isopeptide (Lys-Gly) (interchain with G-Cter in SUMO1); alternate). A Glycyl lysine isopeptide (Lys-Gly) (interchain with G-Cter in SUMO2); alternate cross-link involves residue K1053. S1100 and S1119 each carry phosphoserine. 2 stretches are compositionally biased toward basic and acidic residues: residues 1129-1211 (GSRE…GRNA) and 1243-1264 (NRED…RGPW). The segment covering 1266-1276 (DDWERDQDMDE) has biased composition (acidic residues). Residues 1277 to 1328 (DYNREMERDMDRDVDRISRPMDMYDRSLDNEWDRDYGRPLDEQESQFRERDI) show a composition bias toward basic and acidic residues. A compositionally biased stretch (pro residues) spans 1330–1342 (SLPPLPPLPPLPP). Residue S1402 is modified to Phosphoserine. Disordered regions lie at residues 1407-1438 (PSDV…SLDS), 1469-1573 (QKEQ…EQER), and 1602-1828 (IPSA…PPGR). Residues 1417-1430 (AEHMPSSHHSSEMM) are compositionally biased toward low complexity. Positions 1469 to 1480 (QKEQLQKMKDFG) are enriched in basic and acidic residues. Residues 1505 to 1520 (MYPPPGSYRPPPPMGK) show a composition bias toward pro residues. Residues 1521–1539 (PPGSIVRPSAPPARSSVPV) show a composition bias toward low complexity. Composition is skewed to pro residues over residues 1540–1562 (TRPP…PPVI) and 1606–1636 (PVLP…PPPV). K1652 participates in a covalent cross-link: Glycyl lysine isopeptide (Lys-Gly) (interchain with G-Cter in SUMO2). 4 stretches are compositionally biased toward basic and acidic residues: residues 1662–1696 (ITLR…EPYF), 1704–1774 (ADHR…DRPV), 1783–1793 (GERRTYPEERM), and 1809–1828 (RVEK…PPGR). Residue K1710 forms a Glycyl lysine isopeptide (Lys-Gly) (interchain with G-Cter in SUMO2) linkage. The involved in interaction with PPP1CA stretch occupies residues 2096-2103 (KKRVRWAD).

Interacts with PPP1CA and NCOA5. Forms a complex with ILF2, ILF3, KHDRBS1, RBMX, NCOA5 and PPP1CA. As to expression, expressed in neuronal, neuroblastoma and embryonic kidney cell lines (at protein level).

It is found in the nucleus. The protein resides in the nucleus speckle. In terms of biological role, plays a role in the reduction of telomerase activity during differentiation of embryonic stem cells by binding to the core promoter of TERT and controlling its down-regulation. The protein is YLP motif-containing protein 1 (YLPM1) of Homo sapiens (Human).